The chain runs to 64 residues: Small ribosomal subunit protein bS21 (64 aa).

The tract at residues 39-64 (EKPSVKRKKKALAAKKRAVKKARKSF) is disordered. A compositionally biased stretch (basic residues) spans 43-64 (VKRKKKALAAKKRAVKKARKSF).

Belongs to the bacterial ribosomal protein bS21 family.

In Myxococcus xanthus, this protein is Small ribosomal subunit protein bS21 (rpsU).